The primary structure comprises 373 residues: Sodium-dependent organic anion transporter (373 aa).

A compositionally biased stretch (polar residues) spans 1-15 (MSTDCAGNSTCPVNS). The interval 1–21 (MSTDCAGNSTCPVNSTEEDPP) is disordered. Residues 1 to 32 (MSTDCAGNSTCPVNSTEEDPPVGMEGHANLKL) lie on the Extracellular side of the membrane. 2 N-linked (GlcNAc...) asparagine glycosylation sites follow: asparagine 8 and asparagine 14. Residues 33 to 53 (LFTVLSAVMVGLVMFSFGCSV) form a helical membrane-spanning segment. Residues 54–67 (ESQKLWLHLRRPWG) lie on the Cytoplasmic side of the membrane. The helical transmembrane segment at 68-88 (IAVGLLSQFGLMPLTAYLLAI) threads the bilayer. Topologically, residues 89–97 (GFGLKPFQA) are extracellular. The chain crosses the membrane as a helical span at residues 98–118 (IAVLMMGSCPGGTISNVLTFW). Residues 119–126 (VDGDMDLS) are Cytoplasmic-facing. The helical transmembrane segment at 127–147 (ISMTTCSTVAALGMMPLCLYI) threads the bilayer. The Extracellular segment spans residues 148–157 (YTRSWTLTQN). The helical transmembrane segment at 158-178 (LVIPYQSIGITLVSLVVPVAS) threads the bilayer. Over 179–195 (GVYVNYRWPKQATVILK) the chain is Cytoplasmic. Residues 196–216 (VGAILGGMLLLVVAVTGMVLA) traverse the membrane as a helical segment. Residues 217–224 (KGWNTDVT) are Extracellular-facing. The chain crosses the membrane as a helical span at residues 225–245 (LLVISCIFPLVGHVTGFLLAF). Over 246–265 (LTHQSWQRCRTISIETGAQN) the chain is Cytoplasmic. A helical transmembrane segment spans residues 266–283 (IQLCIAMLQLSFSAEYLV). Residue glutamine 284 is a topological domain, extracellular. The helical transmembrane segment at 285–305 (LLNFALAYGLFQVLHGLLIVA) threads the bilayer. At 306–373 (AYQAYKRRQK…ELTSHIPSCE (68 aa)) the chain is on the cytoplasmic side.

This sequence belongs to the bile acid:sodium symporter (BASS) (TC 2.A.28) family. In terms of processing, glycosylated. In terms of tissue distribution, highest expression in lung and testis, moderate expression in heart, bladder and skin, and low expression in blood, liver, stomach, small intestine, spleen, kidney, adrenal gland, seminal vesicle, preputial gland, coagulating gland, lacrimal gland/eye, and brain.

It is found in the membrane. It catalyses the reaction estrone 3-sulfate(out) + 2 Na(+)(out) = estrone 3-sulfate(in) + 2 Na(+)(in). The enzyme catalyses 17beta-estradiol 3-sulfate(out) + 2 Na(+)(out) = 17beta-estradiol 3-sulfate(in) + 2 Na(+)(in). It carries out the reaction dehydroepiandrosterone 3-sulfate(out) + 2 Na(+)(out) = dehydroepiandrosterone 3-sulfate(in) + 2 Na(+)(in). The catalysed reaction is androst-5-ene-diol 3-sulfate(out) + 2 Na(+)(out) = androst-5-ene-diol 3-sulfate(in) + 2 Na(+)(in). It catalyses the reaction pregnenolone sulfate(out) + 2 Na(+)(out) = pregnenolone sulfate(in) + 2 Na(+)(in). The enzyme catalyses taurolithocholate 3-sulfate(out) + 2 Na(+)(out) = taurolithocholate 3-sulfate(in) + 2 Na(+)(in). It carries out the reaction androsterone 3alpha-sulfate(out) + 2 Na(+)(out) = androsterone 3alpha-sulfate(in) + 2 Na(+)(in). The catalysed reaction is 5alpha-dihydrotestosterone sulfate(out) + 2 Na(+)(out) = 5alpha-dihydrotestosterone sulfate(in) + 2 Na(+)(in). It catalyses the reaction 17beta-estradiol 17-sulfate(out) + 2 Na(+)(out) = 17beta-estradiol 17-sulfate(in) + 2 Na(+)(in). The enzyme catalyses 17alpha-hydroxypregnenolone 3-sulfate(out) + 2 Na(+)(out) = 17alpha-hydroxypregnenolone 3-sulfate(in) + 2 Na(+)(in). It carries out the reaction epiandrosterone 3-sulfate(out) + 2 Na(+)(out) = epiandrosterone 3-sulfate(in) + 2 Na(+)(in). The catalysed reaction is epitestosterone 17-sulfate(out) + 2 Na(+)(out) = epitestosterone 17-sulfate(in) + 2 Na(+)(in). It catalyses the reaction testosterone 17-sulfate(out) + 2 Na(+)(out) = testosterone 17-sulfate(in) + 2 Na(+)(in). The enzyme catalyses 16alpha-hydroxydehydroepiandrosterone 3-sulfate(out) + 2 Na(+)(out) = 16alpha-hydroxydehydroepiandrosterone 3-sulfate(in) + 2 Na(+)(in). Its function is as follows. Transports sulfoconjugated steroid hormones from the extracellular compartment into the cytosol in a sodium-dependent manner without hydrolysis. Steroid sulfate hormones are commonly considered to be biologically inactive metabolites, that may be activated by steroid sulfatases into free steroids. May play an important role by delivering sulfoconjugated steroids to specific target cells in reproductive organs. May play a role transporting the estriol precursor 16alpha-hydroxydehydroepiandrosterone 3-sulfate (16a-OH-DHEAS) at the fetal blood vessel endothelium. Can also transport other sulfoconjugated molecules such as taurolithocholic acid-3-sulfate and sulfoconjugated pyrenes. In Mus musculus (Mouse), this protein is Sodium-dependent organic anion transporter (Slc10a6).